We begin with the raw amino-acid sequence, 573 residues long: Kinesin light chain 1 (573 aa).

A coiled-coil region spans residues 27-156 (KTKQVIQGLE…HLEFMNQLKK (130 aa)). The span at 155 to 176 (KKYDDDISPSEDKDTDSTKEPL) shows a compositional bias: basic and acidic residues. The disordered stretch occupies residues 155 to 203 (KKYDDDISPSEDKDTDSTKEPLDDLFPNDEDDPGQGIQQQHSSAAAAAQ). Phosphoserine is present on Ser162. Over residues 188–203 (GQGIQQQHSSAAAAAQ) the composition is skewed to low complexity. TPR repeat units lie at residues 213 to 246 (LRTL…LEKT), 255 to 288 (ATML…REKT), 297 to 330 (AATL…REKV), 339 to 372 (AKQL…YQTK), and 381 to 414 (AKTK…AHER). Tyr449 is modified (phosphotyrosine). Ser460 bears the Phosphoserine mark. One copy of the TPR 6 repeat lies at 464–497 (TTTLKNLGALYRRQGKFEAAETLEEAAMRSRKQG). Phosphoserine; by AMPK is present on residues Ser521 and Ser524. Glu547 is subject to Phosphoserine. Residues 553 to 573 (SGRASFCGKRQQQQWPGRRHR) form a disordered region.

It belongs to the kinesin light chain family. In terms of assembly, oligomeric complex composed of two heavy chains and two light chains. Interacts with SPAG9. Interacts with ATCAY; may link mitochondria to KLC1 and regulate mitochondria localization into neuron projections. Interacts (via TPR repeats) with TOR1A; the interaction associates TOR1A with the kinesin oligomeric complex. Interacts with BORCS5. Interacts with MAPK8IP3/JIP3 and NTRK2/TRKB; interaction with NTRK2/TRKB is mediated by MAPK8IP3/JIP3. Interacts with CLSTN1; phosphorylation at Ser-460 inhibits interaction with CLSTN1. As to quaternary structure, (Microbial infection) Interacts with adenovirus hexon-interlacing protein; this interaction leads to capsid disruption at the nuclear pore complex during virus entry into host cell. In terms of processing, phosphorylation at Ser-460 by ERK inhibits interaction with CLSTN1 and localization to cytoplasmic vesicles. Found in a variety of tissues. Mostly abundant in brain and spine.

The protein resides in the cell projection. The protein localises to the growth cone. Its subcellular location is the cytoplasmic vesicle. It is found in the cytoplasm. It localises to the cytoskeleton. Its function is as follows. Kinesin is a microtubule-associated force-producing protein that may play a role in organelle transport. The light chain may function in coupling of cargo to the heavy chain or in the modulation of its ATPase activity. The chain is Kinesin light chain 1 (KLC1) from Homo sapiens (Human).